A 205-amino-acid polypeptide reads, in one-letter code: Ribosomal RNA small subunit methyltransferase G (205 aa).

S-adenosyl-L-methionine contacts are provided by residues Gly-73, Leu-78, 124–125, and Arg-138; that span reads VE.

The protein belongs to the methyltransferase superfamily. RNA methyltransferase RsmG family.

The protein resides in the cytoplasm. The enzyme catalyses guanosine(527) in 16S rRNA + S-adenosyl-L-methionine = N(7)-methylguanosine(527) in 16S rRNA + S-adenosyl-L-homocysteine. Specifically methylates the N7 position of guanine in position 527 of 16S rRNA. The protein is Ribosomal RNA small subunit methyltransferase G of Actinobacillus pleuropneumoniae serotype 7 (strain AP76).